Here is a 433-residue protein sequence, read N- to C-terminus: MTRDTSPQLQYLSGFGNEFASEALPGALPVGQNSPQKAPYGLYAELLSGTAFTMTRSELRRTWLYRIRPSALHPRFERLERQPLTGALGAITPNRLRWSPQPMPAEPTDFIEGWLPMVANSASEKPAGVSIYIYRANRSMERVFFNADGELLLVPEQGRLRIATELGVLEVEPLEIAVIPRGMKFRVELLDDQARGYIAENHGAPLRIPDLGPIGSNGLANPRDFLTPVAHYEETSGPVQLVQKFLGEHWACELQHSPLDVVAWHGSNVPYKYDLRRFNTIGTVSFDHPDPSIFTVLTSPTSVHGMANMDFVIFPPRWMVAENTFRPPWFHRNLMNEFMGLIQGAYDAKAEGFLPGGASLHGVMSAHGPDAETCDKAISVDLAPHKIDNTMAFMFETSQVLRPSRQALESPQLQADYDSCWATLPSTFNPNRR.

Catalysis depends on His-288, which acts as the Proton acceptor. Fe cation is bound by residues His-331 and Glu-337. Homogentisate contacts are provided by Tyr-346 and His-367. Position 367 (His-367) interacts with Fe cation.

It belongs to the homogentisate dioxygenase family. Hexamer; dimer of trimers. Requires Fe cation as cofactor.

It carries out the reaction homogentisate + O2 = 4-maleylacetoacetate + H(+). It participates in amino-acid degradation; L-phenylalanine degradation; acetoacetate and fumarate from L-phenylalanine: step 4/6. In terms of biological role, involved in the catabolism of homogentisate (2,5-dihydroxyphenylacetate or 2,5-OH-PhAc), a central intermediate in the degradation of phenylalanine and tyrosine. Catalyzes the oxidative ring cleavage of the aromatic ring of homogentisate to yield maleylacetoacetate. The polypeptide is Homogentisate 1,2-dioxygenase (Pseudomonas entomophila (strain L48)).